Consider the following 406-residue polypeptide: Exodeoxyribonuclease 7 large subunit (406 aa).

It belongs to the XseA family. As to quaternary structure, heterooligomer composed of large and small subunits.

The protein localises to the cytoplasm. It catalyses the reaction Exonucleolytic cleavage in either 5'- to 3'- or 3'- to 5'-direction to yield nucleoside 5'-phosphates.. Functionally, bidirectionally degrades single-stranded DNA into large acid-insoluble oligonucleotides, which are then degraded further into small acid-soluble oligonucleotides. The chain is Exodeoxyribonuclease 7 large subunit from Thermobifida fusca (strain YX).